The primary structure comprises 533 residues: D-3-phosphoglycerate dehydrogenase (533 aa).

At Ala-2 the chain carries N-acetylalanine. Ser-14 is modified (phosphoserine). Residue Lys-58 is modified to N6-acetyllysine. NAD(+) is bound by residues Thr-78, Arg-155–Ile-156, Asp-175, Thr-207, Cys-234–Arg-236, and Asp-260. At Thr-78 the chain carries Phosphothreonine. The active site involves Arg-236. Residue Glu-265 is part of the active site. Catalysis depends on His-283, which acts as the Proton donor. His-283 to Ala-286 provides a ligand contact to NAD(+).

The protein belongs to the D-isomer specific 2-hydroxyacid dehydrogenase family. In terms of assembly, homotetramer.

It carries out the reaction (2R)-3-phosphoglycerate + NAD(+) = 3-phosphooxypyruvate + NADH + H(+). It catalyses the reaction (R)-2-hydroxyglutarate + NAD(+) = 2-oxoglutarate + NADH + H(+). The catalysed reaction is (S)-malate + NAD(+) = oxaloacetate + NADH + H(+). The protein operates within amino-acid biosynthesis; L-serine biosynthesis; L-serine from 3-phospho-D-glycerate: step 1/3. In terms of biological role, catalyzes the reversible oxidation of 3-phospho-D-glycerate to 3-phosphonooxypyruvate, the first step of the phosphorylated L-serine biosynthesis pathway. Also catalyzes the reversible oxidation of 2-hydroxyglutarate to 2-oxoglutarate and the reversible oxidation of (S)-malate to oxaloacetate. The chain is D-3-phosphoglycerate dehydrogenase (PHGDH) from Sus scrofa (Pig).